Here is a 625-residue protein sequence, read N- to C-terminus: DELLA protein SLR1 (625 aa).

The segment at 1-34 is disordered; the sequence is MKREYQEAGGSSGGGSSADMGSCKDKVMAGAAGE. The DELLA motif motif lies at 39-43; that stretch reads DELLA. A disordered region spans residues 167-209; sequence TADPSAADSARDTKRMRTGGGSTSSSSSSSSSLGGGASRGSVV. Positions 189 to 198 are enriched in low complexity; sequence TSSSSSSSSS. The GRAS domain occupies 232–621; sequence VDTQEAGIRL…RPLIATSAWR (390 aa). The interval 239–294 is leucine repeat I (LRI); that stretch reads IRLVHALLACAEAVQQENFAAAEALVKQIPTLAASQGGAMRKVAAYFGEALARRVY. Positions 241 to 278 are required for possible homodimerization; it reads LVHALLACAEAVQQENFAAAEALVKQIPTLAASQGGAM. The short motif at 246–250 is the LxCxE motif element; sequence LACAE. Positions 313 to 378 are VHIID; the sequence is HAHFYESCPY…GGPPSFRLTG (66 aa). The short motif at 344-348 is the VHIID element; it reads VHVVD. A leucine repeat II (LRII) region spans residues 392–431; it reads QVGWKLAQFAHTIRVDFQYRGLVAATLADLEPFMLQPEGE. The PFYRE stretch occupies residues 441-542; sequence IAVNSVFELH…EVYLGRQICN (102 aa). Positions 449–453 match the LXXLL motif motif; the sequence is LHRLL. The SAW stretch occupies residues 545–621; sequence ACEGAERTER…RPLIATSAWR (77 aa).

It belongs to the GRAS family. DELLA subfamily. May be a homodimer. Interacts directly with the GID2 component of the SCF(GID2) complex. Interacts with GID1 in a GA-dependent manner, probably leading to its interaction with GID2 and its subsequent degradation. Interacts with D14 and GID1 in an strigolactone-dependent manner. Interacts with HD16/EL1. Phosphorylated on Ser/Thr residues in the N-terminal part. Both phosphorylated and unphosphorylated forms are degraded upon GA treatment, suggesting that phosphorylation does not trigger ubiquitination. Phosphorylated by HD16/EL1. Phosphorylation enhances its stability. In terms of processing, ubiquitinated. Upon GA application it is ubiquitinated by the SCF(GID2) complex, leading to its subsequent degradation. Expressed in nodes, internodes, leaf sheats of young seedlings and ears of adult plants. Weakly expressed in leaf blade and root.

The protein localises to the nucleus. Probable transcriptional regulator that acts as a repressor of the gibberellin (GA) signaling pathway. Probably acts by participating in large multiprotein complexes that repress transcription of GA-inducible genes. Upon GA application, it is degraded by the proteasome, allowing the GA signaling pathway. In contrast, its overexpression prevents the GA signaling pathway and induces a dwarf phenotype. The polypeptide is DELLA protein SLR1 (Oryza sativa subsp. japonica (Rice)).